Reading from the N-terminus, the 921-residue chain is AdoMet-dependent rRNA methyltransferase SPB1 (921 aa).

S-adenosyl-L-methionine contacts are provided by glycine 58, tryptophan 60, aspartate 78, aspartate 94, and aspartate 119. The active-site Proton acceptor is the lysine 159. A coiled-coil region spans residues 367-414 (VEEMDEDDQIDDELARLNEEAARKARKERRRKNELRQKKILKMQLQMT). 5 disordered regions span residues 448 to 476 (ALIQQADVSDDESETIVSSQHTDDDDPET), 491 to 604 (EFKQ…KRSL), 635 to 713 (ELDE…GKQK), 814 to 835 (LEKAQKKAETINENEDISEKEK), and 866 to 921 (RGLK…GPRN). Basic and acidic residues predominate over residues 491–522 (EFKQKQSERDAKFRAKQARLQDAKNDSWHGIK). Acidic residues-rich tracts occupy residues 523 to 542 (DDEENDEDDDEANLSDESEG), 555 to 568 (ETFDTDDEEDEEDE), 635 to 684 (ELDE…DDFE), and 697 to 708 (DEEWDLNGEDEE). Residues 796-835 (IKKVAEAKARKKMRTLRRLEKAQKKAETINENEDISEKEK) adopt a coiled-coil conformation. Residues 814–823 (LEKAQKKAET) show a composition bias toward basic and acidic residues. Positions 868-879 (LKGRPKGTKGRY) are enriched in basic residues. Over residues 880–892 (KMVDPRMKKELRA) the composition is skewed to basic and acidic residues.

It belongs to the class I-like SAM-binding methyltransferase superfamily. RNA methyltransferase RlmE family. SPB1 subfamily. In terms of assembly, component of the nucleolar and nucleoplasmic pre-60S ribosomal particle.

It localises to the nucleus. It is found in the nucleolus. The enzyme catalyses a ribonucleotide in rRNA + S-adenosyl-L-methionine = a 2'-O-methylribonucleotide in rRNA + S-adenosyl-L-homocysteine + H(+). Required for proper assembly of pre-ribosomal particles during the biogenesis of the 60S ribosomal subunit. This chain is AdoMet-dependent rRNA methyltransferase SPB1, found in Mycosarcoma maydis (Corn smut fungus).